Consider the following 156-residue polypeptide: Endoribonuclease YbeY (156 aa).

The Zn(2+) site is built by histidine 122, histidine 126, and histidine 132.

Belongs to the endoribonuclease YbeY family. Requires Zn(2+) as cofactor.

It localises to the cytoplasm. In terms of biological role, single strand-specific metallo-endoribonuclease involved in late-stage 70S ribosome quality control and in maturation of the 3' terminus of the 16S rRNA. This is Endoribonuclease YbeY from Bacillus cereus (strain ATCC 14579 / DSM 31 / CCUG 7414 / JCM 2152 / NBRC 15305 / NCIMB 9373 / NCTC 2599 / NRRL B-3711).